Here is a 120-residue protein sequence, read N- to C-terminus: Large ribosomal subunit protein uL22 (120 aa).

The protein belongs to the universal ribosomal protein uL22 family. Part of the 50S ribosomal subunit.

This protein binds specifically to 23S rRNA; its binding is stimulated by other ribosomal proteins, e.g. L4, L17, and L20. It is important during the early stages of 50S assembly. It makes multiple contacts with different domains of the 23S rRNA in the assembled 50S subunit and ribosome. Its function is as follows. The globular domain of the protein is located near the polypeptide exit tunnel on the outside of the subunit, while an extended beta-hairpin is found that lines the wall of the exit tunnel in the center of the 70S ribosome. The protein is Large ribosomal subunit protein uL22 of Oenococcus oeni (strain ATCC BAA-331 / PSU-1).